The primary structure comprises 67 residues: Large ribosomal subunit protein bL35 (67 aa).

It belongs to the bacterial ribosomal protein bL35 family.

The polypeptide is Large ribosomal subunit protein bL35 (Acidovorax ebreus (strain TPSY) (Diaphorobacter sp. (strain TPSY))).